We begin with the raw amino-acid sequence, 304 residues long: Protease HtpX homolog (304 aa).

The next 2 helical transmembrane spans lie at 14–34 (IFII…IGII) and 39–59 (YLNG…IMVM). Position 144 (His144) interacts with Zn(2+). Residue Glu145 is part of the active site. His148 serves as a coordination point for Zn(2+). The next 2 membrane-spanning stretches (helical) occupy residues 159-179 (IAIA…RMIF) and 202-222 (AIIY…ATAI). Glu231 is a Zn(2+) binding site.

It belongs to the peptidase M48B family. Requires Zn(2+) as cofactor.

It localises to the cell membrane. The sequence is that of Protease HtpX homolog from Listeria monocytogenes serovar 1/2a (strain ATCC BAA-679 / EGD-e).